Consider the following 677-residue polypeptide: DNA ligase (677 aa).

Residues 38-42 (DYDFD), 87-88 (SL), and glutamate 121 contribute to the NAD(+) site. Lysine 123 acts as the N6-AMP-lysine intermediate in catalysis. 4 residues coordinate NAD(+): arginine 144, glutamate 187, lysine 300, and lysine 324. 4 residues coordinate Zn(2+): cysteine 418, cysteine 421, cysteine 436, and cysteine 442. The BRCT domain occupies 601–677 (LINSNFEGLS…ISEEEFEAML (77 aa)).

This sequence belongs to the NAD-dependent DNA ligase family. LigA subfamily. Mg(2+) is required as a cofactor. The cofactor is Mn(2+).

The catalysed reaction is NAD(+) + (deoxyribonucleotide)n-3'-hydroxyl + 5'-phospho-(deoxyribonucleotide)m = (deoxyribonucleotide)n+m + AMP + beta-nicotinamide D-nucleotide.. Its function is as follows. DNA ligase that catalyzes the formation of phosphodiester linkages between 5'-phosphoryl and 3'-hydroxyl groups in double-stranded DNA using NAD as a coenzyme and as the energy source for the reaction. It is essential for DNA replication and repair of damaged DNA. This Chlorobium luteolum (strain DSM 273 / BCRC 81028 / 2530) (Pelodictyon luteolum) protein is DNA ligase.